Consider the following 235-residue polypeptide: tRNA (guanine-N(1)-)-methyltransferase (235 aa).

Residues G114 and 134-139 (IGDYIL) each bind S-adenosyl-L-methionine.

It belongs to the RNA methyltransferase TrmD family. Homodimer.

Its subcellular location is the cytoplasm. It carries out the reaction guanosine(37) in tRNA + S-adenosyl-L-methionine = N(1)-methylguanosine(37) in tRNA + S-adenosyl-L-homocysteine + H(+). Specifically methylates guanosine-37 in various tRNAs. The chain is tRNA (guanine-N(1)-)-methyltransferase from Ehrlichia canis (strain Jake).